A 260-amino-acid polypeptide reads, in one-letter code: Ribose-5-phosphate isomerase A (260 aa).

Residues 33 to 36 (TGST), 89 to 92 (DGAD), and 102 to 105 (KGGG) contribute to the substrate site. The Proton acceptor role is filled by Glu-111. Lys-129 is a binding site for substrate.

The protein belongs to the ribose 5-phosphate isomerase family. In terms of assembly, homodimer.

The enzyme catalyses aldehydo-D-ribose 5-phosphate = D-ribulose 5-phosphate. The protein operates within carbohydrate degradation; pentose phosphate pathway; D-ribose 5-phosphate from D-ribulose 5-phosphate (non-oxidative stage): step 1/1. Its function is as follows. Catalyzes the reversible conversion of ribose-5-phosphate to ribulose 5-phosphate. The sequence is that of Ribose-5-phosphate isomerase A from Dinoroseobacter shibae (strain DSM 16493 / NCIMB 14021 / DFL 12).